The following is a 357-amino-acid chain: Chorismate synthase (357 aa).

Residue Arg46 participates in NADP(+) binding. FMN is bound by residues 123–125 (RSS), 235–236 (NA), Gly275, 290–294 (KPTPS), and Arg316.

It belongs to the chorismate synthase family. Homotetramer. The cofactor is FMNH2.

The catalysed reaction is 5-O-(1-carboxyvinyl)-3-phosphoshikimate = chorismate + phosphate. It participates in metabolic intermediate biosynthesis; chorismate biosynthesis; chorismate from D-erythrose 4-phosphate and phosphoenolpyruvate: step 7/7. Its function is as follows. Catalyzes the anti-1,4-elimination of the C-3 phosphate and the C-6 proR hydrogen from 5-enolpyruvylshikimate-3-phosphate (EPSP) to yield chorismate, which is the branch point compound that serves as the starting substrate for the three terminal pathways of aromatic amino acid biosynthesis. This reaction introduces a second double bond into the aromatic ring system. The sequence is that of Chorismate synthase from Sulfurovum sp. (strain NBC37-1).